A 433-amino-acid polypeptide reads, in one-letter code: Pyroglutamylated RF-amide peptide receptor (433 aa).

Over 1-46 (MQALNITAEQFSRLLSAHNLTREQFIHRYGLRPLVYTPELPARAKL) the chain is Extracellular. Asparagine 5 and asparagine 19 each carry an N-linked (GlcNAc...) asparagine glycan. The helical transmembrane segment at 47–67 (AFALAGALIFALALFGNSLVI) threads the bilayer. Residues 68–81 (YVVTRSKAMRTVTN) are Cytoplasmic-facing. The chain crosses the membrane as a helical span at residues 82 to 102 (IFICSLALSDLLIAFFCIPVT). Over 103–120 (MLQNISDKWLGGAFICKM) the chain is Extracellular. The helical transmembrane segment at 121–141 (VPFVQSTAVVTEILTMTCIAV) threads the bilayer. At 142-162 (ERHQGLIHPFKMKWQYTTRRA) the chain is on the cytoplasmic side. The helical transmembrane segment at 163-183 (FTILGVVWLAAIIVGSPMWHV) threads the bilayer. Topologically, residues 184–212 (QRLEIKYDFLYEKEHVCCLEEWASPMHQR) are extracellular. Residues 213 to 233 (IYTTFILVILFLLPLVVMLVL) form a helical membrane-spanning segment. The Cytoplasmic segment spans residues 234-271 (YSKIGYELWIKKRVGDSSALQTIHGKEMSKIARKKKRA). The helical transmembrane segment at 272–292 (VVMMVTVVALFAACWAPFHVV) threads the bilayer. Over 293–313 (HMMVEYSNFEKEYDDVTIKMV) the chain is Extracellular. Residues 314–334 (FAVAQTIGFFNSICNPFVYAF) traverse the membrane as a helical segment. The Cytoplasmic portion of the chain corresponds to 335–433 (MNENFKKNFL…NSTFGSGHEL (99 aa)).

Belongs to the G-protein coupled receptor 1 family. In terms of tissue distribution, expressed widely in the brain with high levels in the cortex and hypothalamus, and moderate levels in the brain stem, caudate nucleus, midbrain hippocampus, thalamus, trigeminal ganglia and spinal cord. Particularly strong expression detected in the mitral cell layer of the olfactory bulb, accessory olfactory bulb, island of Calleja and nucleus of the solitary tract. In peripheral tissues, expressed at moderate levels in the eye, liver, kidney, pituitary gland, testis and thymus.

The protein resides in the cell membrane. Its function is as follows. Receptor for the orexigenic neuropeptide QRFP. The activity of this receptor is mediated by G proteins that modulate adenylate cyclase activity and intracellular calcium levels. The sequence is that of Pyroglutamylated RF-amide peptide receptor (Qrfpr) from Mus musculus (Mouse).